A 387-amino-acid polypeptide reads, in one-letter code: Sulfoacetaldehyde reductase (387 aa).

It belongs to the iron-containing alcohol dehydrogenase family.

The catalysed reaction is 2-hydroxyethane-1-sulfonate + NAD(+) = sulfoacetaldehyde + NADH + H(+). It functions in the pathway organosulfur degradation; alkanesulfonate degradation. Involved in an anaerobic respiration pathway that converts the sulfonate taurine (2-aminoethanesulfonate) to ammonia, acetate and sulfide. Catalyzes the NADH-dependent reduction of sulfoacetaldehyde to 2-hydroxyethane-1-sulfonate (isethionate). Does not accept acetaldehyde as a substrate. This chain is Sulfoacetaldehyde reductase, found in Bilophila wadsworthia (strain 3_1_6).